We begin with the raw amino-acid sequence, 124 residues long: Fluoride-specific ion channel FluC (124 aa).

4 helical membrane passes run 5-25, 38-58, 69-89, and 99-119; these read ILAV…TGTW, TLAV…LFLL, GLIV…LDTL, and LALG…WAGL. Na(+) is bound by residues G76 and T79.

It belongs to the fluoride channel Fluc/FEX (TC 1.A.43) family.

Its subcellular location is the cell inner membrane. The enzyme catalyses fluoride(in) = fluoride(out). Its activity is regulated as follows. Na(+) is not transported, but it plays an essential structural role and its presence is essential for fluoride channel function. In terms of biological role, fluoride-specific ion channel. Important for reducing fluoride concentration in the cell, thus reducing its toxicity. This chain is Fluoride-specific ion channel FluC, found in Pseudomonas syringae pv. syringae (strain B728a).